A 419-amino-acid polypeptide reads, in one-letter code: tRNA modification GTPase MnmE (419 aa).

Positions 20, 76, and 115 each coordinate (6S)-5-formyl-5,6,7,8-tetrahydrofolate. One can recognise a TrmE-type G domain in the interval 211 to 348; it reads GYEVAIIGPP…LLDLVYDRLR (138 aa). Asn-221 serves as a coordination point for K(+). GTP contacts are provided by residues 221–226, 240–246, and 265–268; these read NAGKST, SEIAGTT, and DTAG. Ser-225 is a Mg(2+) binding site. 3 residues coordinate K(+): Ser-240, Ile-242, and Thr-245. Thr-246 serves as a coordination point for Mg(2+). Lys-419 lines the (6S)-5-formyl-5,6,7,8-tetrahydrofolate pocket.

Belongs to the TRAFAC class TrmE-Era-EngA-EngB-Septin-like GTPase superfamily. TrmE GTPase family. Homodimer. Heterotetramer of two MnmE and two MnmG subunits. It depends on K(+) as a cofactor.

The protein localises to the cytoplasm. Functionally, exhibits a very high intrinsic GTPase hydrolysis rate. Involved in the addition of a carboxymethylaminomethyl (cmnm) group at the wobble position (U34) of certain tRNAs, forming tRNA-cmnm(5)s(2)U34. The protein is tRNA modification GTPase MnmE of Paracoccus denitrificans (strain Pd 1222).